The chain runs to 155 residues: Small ribosomal subunit protein uS7cz/uS7cy (155 aa).

Belongs to the universal ribosomal protein uS7 family. As to quaternary structure, part of the 30S ribosomal subunit.

It localises to the plastid. Its subcellular location is the chloroplast. One of the primary rRNA binding proteins, it binds directly to 16S rRNA where it nucleates assembly of the head domain of the 30S subunit. The protein is Small ribosomal subunit protein uS7cz/uS7cy (rps7-A) of Nandina domestica (Heavenly bamboo).